We begin with the raw amino-acid sequence, 62 residues long: Ranacyclin-T (62 aa).

Positions Met1–Cys22 are cleaved as a signal peptide. A propeptide spanning residues Val23 to Arg43 is cleaved from the precursor. A disulfide bridge connects residues Cys49 and Cys59. Residue Lys60 is modified to Lysine amide.

Belongs to the frog skin active peptide (FSAP) family. Brevinin subfamily. As to expression, expressed by the skin granular glands.

It localises to the secreted. In terms of biological role, has antibacterial activity against Gram-positive bacteria B.megaterium Bm11, S.lentus and M.luteus, and Gram-negative bacteria E.coli D22, Y.pseudotuberculosis YP III and P.syringae pv tabaci, and antifungal activity against C.albicans ATCC 10231, C.tropicalis, C.guiller-mondii and P.nicotianae spores. Has weak hemolytic activity. The mature peptide inserts into the hydrophobic core of the bacterial cell membrane and increases permeability without disrupting membrane integrity. Probably binds to the outer membrane surface before aggregating to form transmembrane pores. The protein is Ranacyclin-T (RNCT) of Rana temporaria (European common frog).